Consider the following 721-residue polypeptide: Polyphosphate kinase (721 aa).

Asn47 lines the ATP pocket. 2 residues coordinate Mg(2+): Arg377 and Arg407. His437 (phosphohistidine intermediate) is an active-site residue. Residues Tyr471, Arg567, and His595 each contribute to the ATP site.

It belongs to the polyphosphate kinase 1 (PPK1) family. Mg(2+) serves as cofactor. An intermediate of this reaction is the autophosphorylated ppk in which a phosphate is covalently linked to a histidine residue through a N-P bond.

It carries out the reaction [phosphate](n) + ATP = [phosphate](n+1) + ADP. Functionally, catalyzes the reversible transfer of the terminal phosphate of ATP to form a long-chain polyphosphate (polyP). The sequence is that of Polyphosphate kinase from Exiguobacterium sp. (strain ATCC BAA-1283 / AT1b).